An 856-amino-acid chain; its full sequence is Translation initiation factor IF-2 (856 aa).

In terms of domain architecture, tr-type G spans 356–526 (PRAPVVTVMG…LLIADLLELK (171 aa)). The G1 stretch occupies residues 365–372 (GHVDHGKT). Residue 365–372 (GHVDHGKT) coordinates GTP. A G2 region spans residues 390-394 (GITQH). The interval 412-415 (DTPG) is G3. GTP-binding positions include 412 to 416 (DTPGH) and 466 to 469 (NKID). Residues 466–469 (NKID) are G4. The segment at 502 to 504 (SAK) is G5.

The protein belongs to the TRAFAC class translation factor GTPase superfamily. Classic translation factor GTPase family. IF-2 subfamily.

Its subcellular location is the cytoplasm. Its function is as follows. One of the essential components for the initiation of protein synthesis. Protects formylmethionyl-tRNA from spontaneous hydrolysis and promotes its binding to the 30S ribosomal subunits. Also involved in the hydrolysis of GTP during the formation of the 70S ribosomal complex. In Ehrlichia ruminantium (strain Welgevonden), this protein is Translation initiation factor IF-2.